The sequence spans 149 residues: Large ribosomal subunit protein uL11 (149 aa).

This sequence belongs to the universal ribosomal protein uL11 family. In terms of assembly, part of the ribosomal stalk of the 50S ribosomal subunit. Interacts with L10 and the large rRNA to form the base of the stalk. L10 forms an elongated spine to which L12 dimers bind in a sequential fashion forming a multimeric L10(L12)X complex. In terms of processing, one or more lysine residues are methylated.

In terms of biological role, forms part of the ribosomal stalk which helps the ribosome interact with GTP-bound translation factors. This chain is Large ribosomal subunit protein uL11, found in Methylobacterium radiotolerans (strain ATCC 27329 / DSM 1819 / JCM 2831 / NBRC 15690 / NCIMB 10815 / 0-1).